A 153-amino-acid polypeptide reads, in one-letter code: MSKHSLIENLKKQIEPIAEGLDYELYHIEFVKEGKENYLRIYIDSENGVSLEGCEKVSRAVSELLDDIDPIQESYYLEVSSPGIDRVLYTDKHLQKYKGYNIVLNLYSPIDKKKKYEGELVDFNENEINIKVEENIVTIPREKISKTTLKGEL.

It belongs to the RimP family.

It is found in the cytoplasm. Functionally, required for maturation of 30S ribosomal subunits. The protein is Ribosome maturation factor RimP of Clostridium botulinum (strain Okra / Type B1).